The primary structure comprises 100 residues: Small ribosomal subunit protein uS14 (100 aa).

Belongs to the universal ribosomal protein uS14 family. As to quaternary structure, part of the 30S ribosomal subunit. Contacts proteins S3 and S10.

Binds 16S rRNA, required for the assembly of 30S particles and may also be responsible for determining the conformation of the 16S rRNA at the A site. This Acaryochloris marina (strain MBIC 11017) protein is Small ribosomal subunit protein uS14.